Consider the following 226-residue polypeptide: CRISPR-associated endonuclease Cas3-HD (226 aa).

In terms of domain architecture, HD Cas3-type spans G9 to G204. Mg(2+) is bound by residues D56, H74, H101, and H102.

The protein belongs to the CRISPR-associated nuclease Cas3-HD family. As to quaternary structure, monomer. Can form a Cascade complex with Csa5, Cas7, Cas5a, Cas3 and Cas8a2. It depends on Mg(2+) as a cofactor.

In terms of biological role, CRISPR (clustered regularly interspaced short palindromic repeat), is an adaptive immune system that provides protection against mobile genetic elements (viruses, transposable elements and conjugative plasmids). CRISPR clusters contain sequences complementary to antecedent mobile elements and target invading nucleic acids. CRISPR clusters are transcribed and processed into CRISPR RNA (crRNA). Cas3 plus Cascade participate in CRISPR interference, the third stage of CRISPR immunity. Acts as a ssDNA and ssRNA nuclease, probably with both exo- and endonuclease activities. Activity is higher for DNA than RNA. This Thermoproteus tenax (strain ATCC 35583 / DSM 2078 / JCM 9277 / NBRC 100435 / Kra 1) protein is CRISPR-associated endonuclease Cas3-HD (cas3').